A 1231-amino-acid chain; its full sequence is Fanconi anemia group J protein homolog (1231 aa).

The Helicase ATP-binding domain occupies 11 to 448 (GGVKILFPCR…SDHEPLRAVC (438 aa)). An ATP-binding site is contributed by 46–53 (SPTGSGKS). Disordered regions lie at residues 104–126 (TFSSDRQMNSTDNAPSNISGASS) and 147–166 (QDDDFQTDRKRIRQSHDEQL). The segment covering 152–166 (QTDRKRIRQSHDEQL) has biased composition (basic and acidic residues). A Nuclear localization signal motif is present at residues 155 to 173 (RKRIRQSHDEQLQARKRRC). Residues C291, C304, C316, and C356 each coordinate [4Fe-4S] cluster. The DEAH box signature appears at 399–402 (DEAH). Residues 890–903 (SKNQQQRMQMSSTN) are compositionally biased toward polar residues. Disordered regions lie at residues 890 to 924 (SKNQQQRMQMSSTNCDDEPSQGTSSSSKNTSPTSS), 936 to 956 (VSEFTQPTSSTQSSVTSPPEI), and 1195 to 1231 (GNENAFNIGRNKGTEQKNRENRLSRSRNKGVSSFFLD). Low complexity-rich tracts occupy residues 909–924 (SQGTSSSSKNTSPTSS) and 940–954 (TQPTSSTQSSVTSPP). Positions 1206-1217 (KGTEQKNRENRL) are enriched in basic and acidic residues.

Belongs to the DEAD box helicase family. DEAH subfamily. [4Fe-4S] cluster serves as cofactor.

It localises to the nucleus. It carries out the reaction Couples ATP hydrolysis with the unwinding of duplex DNA at the replication fork by translocating in the 5'-3' direction. This creates two antiparallel DNA single strands (ssDNA). The leading ssDNA polymer is the template for DNA polymerase III holoenzyme which synthesizes a continuous strand.. The enzyme catalyses ATP + H2O = ADP + phosphate + H(+). In terms of biological role, DNA-dependent helicase and 5' to 3' DNA helicase required for the maintenance of chromosomal stability. Involved in the repair of DNA double-strand breaks by homologous recombination. Involved in the repair of abasic sites at replication forks by promoting the degradation of DNA-protein cross-links: acts by catalyzing unfolding of HMCES DNA-protein cross-link via its helicase activity, exposing the underlying DNA and enabling cleavage of the DNA-protein adduct by the SPRTN metalloprotease. This is Fanconi anemia group J protein homolog (brip1.L) from Xenopus laevis (African clawed frog).